Reading from the N-terminus, the 150-residue chain is NADH-quinone oxidoreductase subunit A (150 aa).

Helical transmembrane passes span Trp14–Ala34, Leu70–Val90, and Leu98–Val118.

This sequence belongs to the complex I subunit 3 family. NDH-1 is composed of 13 different subunits. Subunits NuoA, H, J, K, L, M, N constitute the membrane sector of the complex.

It localises to the cell inner membrane. It catalyses the reaction a quinone + NADH + 5 H(+)(in) = a quinol + NAD(+) + 4 H(+)(out). In terms of biological role, NDH-1 shuttles electrons from NADH, via FMN and iron-sulfur (Fe-S) centers, to quinones in the respiratory chain. The immediate electron acceptor for the enzyme in this species is believed to be ubiquinone. Couples the redox reaction to proton translocation (for every two electrons transferred, four hydrogen ions are translocated across the cytoplasmic membrane), and thus conserves the redox energy in a proton gradient. The chain is NADH-quinone oxidoreductase subunit A from Proteus mirabilis (strain HI4320).